The sequence spans 1059 residues: Microtubule-associated protein 1S (1059 aa).

The tract at residues 1 to 797 is necessary for the microtubule-organizing center localization; that stretch reads MAAVAGSGAA…SESLPTLSDS (797 aa). Phosphoserine occurs at positions 321 and 472. 2 disordered regions span residues 461–733 and 751–942; these read PQDL…ASPH and VPMA…SATP. Basic and acidic residues-rich tracts occupy residues 466-486 and 494-530; these read GPGRAESKESVGSRDSSKREG and PGQERPGVARKEPARAEAPRKTEKEAKTPRELKKDPK. The segment covering 547–557 has biased composition (polar residues); the sequence is SVPNLKKTNAQ. Serine 582 bears the Phosphoserine mark. A compositionally biased stretch (low complexity) spans 591–603; that stretch reads ASPPSAACGSPAS. Threonine 638 bears the Phosphothreonine mark. Serine 640 bears the Phosphoserine mark. Residues 642 to 652 show a composition bias toward basic and acidic residues; the sequence is ESHRSPAEGSE. Serine 655 and serine 657 each carry phosphoserine. A necessary for interaction with RASSF1 isoform A and isoform C region spans residues 666–1059; that stretch reads PDASPTVTTP…DAFPACKVEF (394 aa). Residues 670–680 are compositionally biased toward low complexity; the sequence is PTVTTPTVTTP. The tract at residues 714–966 is necessary for association with microtubules; sequence EAGLSLPLRG…GSSAHLVDEE (253 aa). Serine 731 and serine 759 each carry phosphoserine. A compositionally biased stretch (low complexity) spans 759–769; that stretch reads SPGSSNDSSAR. Polar residues predominate over residues 783-796; the sequence is PPTSVSESLPTLSD. Serine 809 bears the Phosphoserine mark. Residues 825 to 836 show a composition bias toward pro residues; that stretch reads PDPLKVPPPLPD. Low complexity-rich tracts occupy residues 873 to 887 and 923 to 936; these read AAAPKATPVAAAKTK and TATRGPSGSASSRP. Residues 960-1059 are necessary for association with actin; the sequence is AHLVDEEFFQ…DAFPACKVEF (100 aa). A necessary for the mitochondrial aggregation and genome destruction region spans residues 967–991; it reads FFQRVRALCYVISGQDQRKEEGMRA.

Belongs to the MAP1 family. As to quaternary structure, heterodimer of a heavy and a light chain. Interacts with microtubules and actin. Both MAP1S heavy and light chains interact with microtubules. MAP1S light chain interacts with actin. Interacts (via C-terminus) with GAN (via Kelch domains). Interacts with ESR1, LRPPRC, RASSF1 isoform A and isoform C, microtubules and VCY2. Interacts with WDR47 (via N-terminus of light chain). In terms of tissue distribution, expressed in neurons (at protein level). Expressed in spermatocytes, spermatids and spermatozoa. Expressed in the cerebral cortex. Highly expressed in testis. Moderately expressed in the brain, colon, heart, kidney, liver, lung, placenta, small intestine, spleen and stomach. Weakly expressed in muscle.

The protein resides in the nucleus. It localises to the cytoplasm. It is found in the cytosol. Its subcellular location is the cytoskeleton. The protein localises to the spindle. Functionally, microtubule-associated protein that mediates aggregation of mitochondria resulting in cell death and genomic destruction (MAGD). Plays a role in anchoring the microtubule organizing center to the centrosomes. Binds to DNA. Plays a role in apoptosis. Involved in the formation of microtubule bundles. The sequence is that of Microtubule-associated protein 1S (MAP1S) from Homo sapiens (Human).